We begin with the raw amino-acid sequence, 120 residues long: uncharacterized protein (120 aa).

It localises to the cytoplasm. The protein localises to the nucleus. This is an uncharacterized protein from Schizosaccharomyces pombe (strain 972 / ATCC 24843) (Fission yeast).